The sequence spans 402 residues: tRNA(Met) cytidine acetate ligase (402 aa).

ATP is bound by residues 7–20, Gly102, Asn171, and Arg196; that span reads ITEY…HELH.

The protein belongs to the TmcAL family.

It localises to the cytoplasm. It catalyses the reaction cytidine(34) in elongator tRNA(Met) + acetate + ATP = N(4)-acetylcytidine(34) in elongator tRNA(Met) + AMP + diphosphate. Its function is as follows. Catalyzes the formation of N(4)-acetylcytidine (ac(4)C) at the wobble position of elongator tRNA(Met), using acetate and ATP as substrates. First activates an acetate ion to form acetyladenylate (Ac-AMP) and then transfers the acetyl group to tRNA to form ac(4)C34. The polypeptide is tRNA(Met) cytidine acetate ligase (Clostridium perfringens (strain SM101 / Type A)).